A 235-amino-acid chain; its full sequence is RNA polymerase sigma factor SigI7 (235 aa).

A Polymerase core binding motif is present at residues 49–62; that stretch reads DELSIALMAFVETI. Residues 191–210 constitute a DNA-binding region (H-T-H motif); that stretch reads VAEIEQSLKIPRKTIERARK.

The protein belongs to the sigma-70 factor family. SigI subfamily. Interacts with RsgI7.

It localises to the cytoplasm. With respect to regulation, negatively regulated by the anti-sigma-I factor RsgI7. Sigma factors are initiation factors that promote the attachment of RNA polymerase to specific initiation sites and are then released. This Acetivibrio thermocellus (strain ATCC 27405 / DSM 1237 / JCM 9322 / NBRC 103400 / NCIMB 10682 / NRRL B-4536 / VPI 7372) (Clostridium thermocellum) protein is RNA polymerase sigma factor SigI7.